Here is a 172-residue protein sequence, read N- to C-terminus: Translationally-controlled tumor protein (172 aa).

The TCTP domain maps to 1–172 (MIIYRDLISH…FKDGLEMEKC (172 aa)). Serine 46 bears the Phosphoserine; by PLK1 mark. Phosphoserine is present on serine 53. Residue serine 64 is modified to Phosphoserine; by PLK1. Residues 70 to 172 (VDIVMNHHLQ…FKDGLEMEKC (103 aa)) form a required for reduction of TSC22D1 protein stability region.

It belongs to the TCTP family. In terms of assembly, homodimer. Interacts with STEAP3. Interacts with TSC22D1; interaction results in the destabilization of TSC22D1 protein.

Its subcellular location is the cytoplasm. Functionally, involved in calcium binding and microtubule stabilization. Acts as a negative regulator of TSC22D1-mediated apoptosis, via interaction with and destabilization of TSC22D1 protein. The chain is Translationally-controlled tumor protein (TPT1) from Bos taurus (Bovine).